The primary structure comprises 204 residues: Large ribosomal subunit protein eL15B (204 aa).

The interval 165 to 185 (TATGKKSRGINKGHKFNNTKA) is disordered. The segment covering 169–185 (KKSRGINKGHKFNNTKA) has biased composition (basic residues).

This sequence belongs to the eukaryotic ribosomal protein eL15 family. As to quaternary structure, component of the large ribosomal subunit (LSU). Mature yeast ribosomes consist of a small (40S) and a large (60S) subunit. The 40S small subunit contains 1 molecule of ribosomal RNA (18S rRNA) and 33 different proteins (encoded by 57 genes). The large 60S subunit contains 3 rRNA molecules (25S, 5.8S and 5S rRNA) and 46 different proteins (encoded by 81 genes).

The protein resides in the cytoplasm. Its function is as follows. Component of the ribosome, a large ribonucleoprotein complex responsible for the synthesis of proteins in the cell. The small ribosomal subunit (SSU) binds messenger RNAs (mRNAs) and translates the encoded message by selecting cognate aminoacyl-transfer RNA (tRNA) molecules. The large subunit (LSU) contains the ribosomal catalytic site termed the peptidyl transferase center (PTC), which catalyzes the formation of peptide bonds, thereby polymerizing the amino acids delivered by tRNAs into a polypeptide chain. The nascent polypeptides leave the ribosome through a tunnel in the LSU and interact with protein factors that function in enzymatic processing, targeting, and the membrane insertion of nascent chains at the exit of the ribosomal tunnel. The polypeptide is Large ribosomal subunit protein eL15B (Saccharomyces cerevisiae (strain ATCC 204508 / S288c) (Baker's yeast)).